The chain runs to 1016 residues: Rho family-interacting cell polarization regulator 2 (1016 aa).

Residues Ser-21 and Ser-37 each carry the phosphoserine modification. A disordered region spans residues 44–73 (AVKKPQAKLKKMHNLGHKNSSPPKEPQPKR). The segment covering 48–59 (PQAKLKKMHNLG) has biased composition (basic residues). Residues 55–113 (MHNLGHKNSSPPKEPQPKRVEEVYRALKNGLDEYLEVHQTELDKLTTQLKDMRRNSRLG) form an involved in cell filopodia formation region. Residues 85–112 (LDEYLEVHQTELDKLTTQLKDMRRNSRL) adopt a coiled-coil conformation. Ser-341 carries the post-translational modification Phosphoserine. The span at 414–428 (TSTELPPGSQSSQNE) shows a compositional bias: polar residues. The disordered stretch occupies residues 414–469 (TSTELPPGSQSSQNEGLKDSSSASCSSSSREGSEPRPHPEGETQGLGKPEGCPVAT). Positions 433–442 (SSSASCSSSS) are enriched in low complexity. Over residues 444-454 (EGSEPRPHPEG) the composition is skewed to basic and acidic residues. Residues Ser-520 and Ser-532 each carry the phosphoserine modification. Positions 636–656 (DSVFSDTETEKNSYRSVHPEA) are disordered. The segment covering 643–656 (ETEKNSYRSVHPEA) has biased composition (basic and acidic residues).

The protein belongs to the RIPOR family. As to quaternary structure, homooligomer; homooligomerization is regulated by RHOC and leads to the formation of concatemers through the association of N- and C-termini. Interacts (phosphorylated form) with 14-3-3 proteins; these interactions occur during myogenic cell differentiation and also induces T cell proliferation arrest. Interacts (phosphorylated form) with HDAC6; this interaction occurs during early myogenic differentiation, prevents HDAC6 to deacetylate tubulin and also induces T cell proliferation arrest. Interacts with DYSF; this interaction occurs during early myogenic differentiation. Interacts with MYOF. Interacts (via active GTP- or inactive GDP-bound forms) with RHOA; this interaction is direct, blocks the loading of GTP to RHOA and decreases upon chemokine CCL19 stimulation in primary T lymphocytes. Interacts with RHOC. Interacts (via phosphorylated form) with YWHAB; this interaction occurs in a chemokine-dependent manner and does not compete for binding of RIPOR2 with RHOA nor blocks inhibition of RIPOR2-mediated RHOA activity. Interacts with YWHAE. Interacts with YWHAQ. In terms of processing, phosphorylated. Chemokine-induced phosphorylation in neutrophils occurs in a PKC- and AKT-dependent manner, resulting in RIPOR2 interaction with YWHAB and stabilization. Phosphorylated by PKCA, AKT1 and MAPKAPK1A; in vitro.

The protein localises to the cytoplasm. The protein resides in the cytoskeleton. It is found in the cell projection. Its subcellular location is the filopodium. It localises to the apical cell membrane. The protein localises to the stereocilium. The protein resides in the stereocilium membrane. In terms of biological role, acts as an inhibitor of the small GTPase RHOA and plays several roles in the regulation of myoblast and hair cell differentiation, lymphocyte T proliferation and neutrophil polarization. Plays a role in fetal mononuclear myoblast differentiation by promoting filopodia and myotube formation. Maintains naive T lymphocytes in a quiescent state and prevents chemokine-induced T lymphocyte responses, such as cell adhesion, polarization and migration. Involved also in the regulation of neutrophil polarization, chemotaxis and adhesion. Required for normal development of inner and outer hair cell stereocilia within the cochlea of the inner ear. Plays a role for maintaining the structural organization of the basal domain of stereocilia. Involved in mechanosensory hair cell function. Required for normal hearing. The chain is Rho family-interacting cell polarization regulator 2 from Bos taurus (Bovine).